A 439-amino-acid polypeptide reads, in one-letter code: General transcription factor IIE subunit 1 (439 aa).

A2 carries the post-translational modification N-acetylalanine. In terms of domain architecture, HTH TFE/IIEalpha-type spans 14–104 (LKRLAKYVIR…NYRTLVNVVK (91 aa)). K67 carries the post-translational modification N6-acetyllysine. 4 residues coordinate Zn(2+): C129, C132, C154, and C157. A C4-type zinc finger spans residues 129–157 (CPVCSSTFTDLEANQLFDPMTGTFRCTFC). The residue at position 268 (S268) is a Phosphoserine. Residues 333–344 (SSAMAGSVGAAA) are compositionally biased toward low complexity. The disordered stretch occupies residues 333-392 (SSAMAGSVGAAAPVTTANGSDSESETSESDDDSPPRPAAVAVHKREEDEEEDDEFEEVAD). Acidic residues-rich tracts occupy residues 354–364 (SESETSESDDD) and 379–392 (EDEE…EVAD).

Belongs to the TFIIE alpha subunit family. In terms of assembly, tetramer of two alpha and two beta chains. Interacts with TAF6/TAFII80. Interacts with ATF7IP. Interacts with SND1. Part of TBP-based Pol II pre-initiation complex (PIC), in which Pol II core assembles with general transcription factors and other specific initiation factors including GTF2E1, GTF2E2, GTF2F1, GTF2F2, TCEA1, ERCC2, ERCC3, GTF2H2, GTF2H3, GTF2H4, GTF2H5, GTF2A1, GTF2A2, GTF2B and TBP; this large multi-subunit PIC complex mediates DNA unwinding and targets Pol II core to the transcription start site where the first phosphodiester bond forms.

The protein resides in the nucleus. Its function is as follows. Recruits TFIIH to the initiation complex and stimulates the RNA polymerase II C-terminal domain kinase and DNA-dependent ATPase activities of TFIIH. Both TFIIH and TFIIE are required for promoter clearance by RNA polymerase. The chain is General transcription factor IIE subunit 1 (GTF2E1) from Pongo abelii (Sumatran orangutan).